Here is a 199-residue protein sequence, read N- to C-terminus: ATP-dependent Clp protease proteolytic subunit (199 aa).

Ser-97 acts as the Nucleophile in catalysis. His-122 is an active-site residue.

Belongs to the peptidase S14 family. Fourteen ClpP subunits assemble into 2 heptameric rings which stack back to back to give a disk-like structure with a central cavity, resembling the structure of eukaryotic proteasomes.

It localises to the cytoplasm. The catalysed reaction is Hydrolysis of proteins to small peptides in the presence of ATP and magnesium. alpha-casein is the usual test substrate. In the absence of ATP, only oligopeptides shorter than five residues are hydrolyzed (such as succinyl-Leu-Tyr-|-NHMec, and Leu-Tyr-Leu-|-Tyr-Trp, in which cleavage of the -Tyr-|-Leu- and -Tyr-|-Trp bonds also occurs).. Its function is as follows. Cleaves peptides in various proteins in a process that requires ATP hydrolysis. Has a chymotrypsin-like activity. Plays a major role in the degradation of misfolded proteins. The protein is ATP-dependent Clp protease proteolytic subunit of Geotalea uraniireducens (strain Rf4) (Geobacter uraniireducens).